Consider the following 600-residue polypeptide: L-galactono-1,4-lactone dehydrogenase, mitochondrial (600 aa).

The transit peptide at 1-25 directs the protein to the mitochondrion; the sequence is MLRSLLLRRSNARSLRPPFPPLRTL. Residues 16–51 are disordered; the sequence is RPPFPPLRTLCTSGQTLTPAPPPPPPPPPPISSSAS. The propeptide at 26 to 91 is removed in mature form; it reads CTSGQTLTPA…AKHKKAQIFR (66 aa). Residues 34–46 show a composition bias toward pro residues; the sequence is PAPPPPPPPPPPI. A helical transmembrane segment spans residues 58–74; it reads YAGYAALALFSGAATYF. In terms of domain architecture, FAD-binding PCMH-type spans 108 to 279; it reads THEVQTRNFN…AEVTLQCVER (172 aa).

The cofactor is FAD.

It localises to the mitochondrion membrane. It catalyses the reaction L-galactono-1,4-lactone + 4 Fe(III)-[cytochrome c] = L-dehydroascorbate + 4 Fe(II)-[cytochrome c] + 5 H(+). The protein operates within cofactor biosynthesis; L-ascorbate biosynthesis. Inhibited by sulfhydryl-modifying agents such as N-ethylmaleimide, monoiodoacetic acid and p-hydroxymercuribenzoic acid. No inhibition by riboflavin and lycorine. Involved in the biosynthesis of ascorbic acid. Uses L-galactono-1,4-lactone as substrate, but not L-gulono-1,4-lactone, D-galactono-1,4-lactone, D-gulono-1,4-lactone, D-erythronic-1,4-lactone, D-xylonic-1,4-lactone, L-mannono-1,4-lactone, D-galactonic acid, D-glucuronic acid or D-gluconic acid. FAD, NAD, NADP and O(2) cannot act as electron acceptor. The protein is L-galactono-1,4-lactone dehydrogenase, mitochondrial of Brassica oleracea (Wild cabbage).